A 524-amino-acid polypeptide reads, in one-letter code: Bifunctional purine biosynthesis protein PurH (524 aa).

The 145-residue stretch at 1 to 145 (MIKQALLSVS…KNHRDVTVIV (145 aa)) folds into the MGS-like domain.

Belongs to the PurH family.

The enzyme catalyses (6R)-10-formyltetrahydrofolate + 5-amino-1-(5-phospho-beta-D-ribosyl)imidazole-4-carboxamide = 5-formamido-1-(5-phospho-D-ribosyl)imidazole-4-carboxamide + (6S)-5,6,7,8-tetrahydrofolate. The catalysed reaction is IMP + H2O = 5-formamido-1-(5-phospho-D-ribosyl)imidazole-4-carboxamide. Its pathway is purine metabolism; IMP biosynthesis via de novo pathway; 5-formamido-1-(5-phospho-D-ribosyl)imidazole-4-carboxamide from 5-amino-1-(5-phospho-D-ribosyl)imidazole-4-carboxamide (10-formyl THF route): step 1/1. The protein operates within purine metabolism; IMP biosynthesis via de novo pathway; IMP from 5-formamido-1-(5-phospho-D-ribosyl)imidazole-4-carboxamide: step 1/1. The sequence is that of Bifunctional purine biosynthesis protein PurH from Cupriavidus necator (strain ATCC 17699 / DSM 428 / KCTC 22496 / NCIMB 10442 / H16 / Stanier 337) (Ralstonia eutropha).